Consider the following 405-residue polypeptide: L-carnitine CoA-transferase (405 aa).

CoA is bound by residues K97 and R104. The Nucleophile role is filled by D169.

Belongs to the CoA-transferase III family. CaiB subfamily. As to quaternary structure, homodimer.

It localises to the cytoplasm. It catalyses the reaction crotonobetainyl-CoA + (R)-carnitine = crotonobetaine + (R)-carnitinyl-CoA. It carries out the reaction 4-(trimethylamino)butanoyl-CoA + (R)-carnitine = (R)-carnitinyl-CoA + 4-(trimethylamino)butanoate. The protein operates within amine and polyamine metabolism; carnitine metabolism. Functionally, catalyzes the reversible transfer of the CoA moiety from gamma-butyrobetainyl-CoA to L-carnitine to generate L-carnitinyl-CoA and gamma-butyrobetaine. Is also able to catalyze the reversible transfer of the CoA moiety from gamma-butyrobetainyl-CoA or L-carnitinyl-CoA to crotonobetaine to generate crotonobetainyl-CoA. The chain is L-carnitine CoA-transferase from Escherichia coli O139:H28 (strain E24377A / ETEC).